The following is a 648-amino-acid chain: SRSF protein kinase 1 (648 aa).

The disordered stretch occupies residues 1–57; it reads MERKVLALQARKKRTKAKKDKAQRKPETQHRGSAPHSESDIPEQEEEILGSDDDEQE. The segment covering 10-22 has biased composition (basic residues); that stretch reads ARKKRTKAKKDKA. Over residues 40-57 the composition is skewed to acidic residues; the sequence is DIPEQEEEILGSDDDEQE. Ser51 carries the phosphoserine modification. In terms of domain architecture, Protein kinase spans 80 to 646; it reads YHVIRKLGWG…AAECLRHPWL (567 aa). Residues 86–94 and Lys109 contribute to the ATP site; that span reads LGWGHFSTV. The active-site Proton acceptor is the Asp213. 2 disordered regions span residues 238 to 354 and 395 to 464; these read WQRS…APEI and PSFL…DSKG. Residues 265-276 are compositionally biased toward basic residues; sequence KNKKKKLKKKQK. Basic and acidic residues-rich tracts occupy residues 277 to 288 and 304 to 317; these read RQAELLEKRMQE and NKQE…DRPL. Phosphoserine is present on residues Ser309, Ser311, and Ser333. 2 stretches are compositionally biased toward polar residues: residues 333–343 and 396–441; these read SNSIGQDQTLT and SFLN…TQLE. A Phosphothreonine modification is found at Thr448. Phosphoserine is present on Ser450. Phosphoserine; by CK2 is present on Ser548.

The protein belongs to the protein kinase superfamily. CMGC Ser/Thr protein kinase family. Monomer. Found in a multisubunit complex containing seven proteins, named toposome, which separates entangled circular chromatin DNA during chromosome segregation. Interacts with HHV-1 ICP27 protein. Interacts with DNAJC8 and AHSA1/AHA1 and this mediates formation of a complex with the Hsp70 /Hsp90 machinery. Binds to IGF2BP1, SYNCRIP, HNRNPA2B1 and HNRNPC. Interacts with SAFB/SAFB1 and SAFB2 which inhibits its activity. Mg(2+) serves as cofactor. In terms of tissue distribution, predominantly expressed in the testis but is also present at lower levels in heart, spleen, liver, brain, kidney, lung and skeletal muscle. Present in all germinal cells in the seminiferous tubules but not in mature spermatozoa.

Its subcellular location is the cytoplasm. It localises to the nucleus. The protein localises to the nucleoplasm. The protein resides in the nucleus matrix. It is found in the microsome. Its subcellular location is the nucleus speckle. It localises to the chromosome. The enzyme catalyses L-seryl-[protein] + ATP = O-phospho-L-seryl-[protein] + ADP + H(+). The catalysed reaction is L-threonyl-[protein] + ATP = O-phospho-L-threonyl-[protein] + ADP + H(+). Its activity is regulated as follows. Activated by phosphorylation on Ser-51 and Ser-548. Serine/arginine-rich protein-specific kinase which specifically phosphorylates its substrates at serine residues located in regions rich in arginine/serine dipeptides, known as RS domains and is involved in the phosphorylation of SR splicing factors and the regulation of splicing. Plays a central role in the regulatory network for splicing, controlling the intranuclear distribution of splicing factors in interphase cells and the reorganization of nuclear speckles during mitosis. Can influence additional steps of mRNA maturation, as well as other cellular activities, such as chromatin reorganization in somatic and sperm cells and cell cycle progression. Phosphorylates SFRS2, ZRSR2, LBR and PRM1. Phosphorylates SRSF1 using a directional (C-terminal to N-terminal) and a dual-track mechanism incorporating both processive phosphorylation (in which the kinase stays attached to the substrate after each round of phosphorylation) and distributive phosphorylation steps (in which the kinase and substrate dissociate after each phosphorylation event). The RS domain of SRSF1 binds first to a docking groove in the large lobe of the kinase domain of SRPK1. This induces certain structural changes in SRPK1 and/or RRM2 domain of SRSF1, allowing RRM2 to bind the kinase and initiate phosphorylation. The cycles continue for several phosphorylation steps in a processive manner (steps 1-8) until the last few phosphorylation steps (approximately steps 9-12). During that time, a mechanical stress induces the unfolding of the beta-4 motif in RRM2, which then docks at the docking groove of SRPK1. This also signals RRM2 to begin to dissociate, which facilitates SRSF1 dissociation after phosphorylation is completed. Can mediate hepatitis B virus (HBV) core protein phosphorylation. It plays a negative role in the regulation of HBV replication through a mechanism not involving the phosphorylation of the core protein but by reducing the packaging efficiency of the pregenomic RNA (pgRNA) without affecting the formation of the viral core particles. Can induce splicing of exon 10 in MAPT/TAU. The sequence is that of SRSF protein kinase 1 from Mus musculus (Mouse).